The following is an 82-amino-acid chain: Small ribosomal subunit protein bS18 (82 aa).

The segment at 1-20 (MSEASSAPVRRPFHRRRKTC) is disordered.

It belongs to the bacterial ribosomal protein bS18 family. As to quaternary structure, part of the 30S ribosomal subunit. Forms a tight heterodimer with protein bS6.

Functionally, binds as a heterodimer with protein bS6 to the central domain of the 16S rRNA, where it helps stabilize the platform of the 30S subunit. The polypeptide is Small ribosomal subunit protein bS18 (Rhizobium etli (strain CIAT 652)).